The primary structure comprises 79 residues: Cytochrome c oxidase assembly factor 6 homolog (79 aa).

The region spanning 9-52 (RQACWGARDEYWKCLDENTEDASKCKKLRSSFESSCPQQWIKYF) is the CHCH domain. The Cx9C motif signature appears at 12 to 22 (CWGARDEYWKC). 2 disulfide bridges follow: cysteine 12–cysteine 44 and cysteine 22–cysteine 33. The Cx10C motif signature appears at 33 to 44 (CKKLRSSFESSC).

Belongs to the cytochrome c oxidase subunit 6B family. In terms of assembly, found in a complex with TMEM177, COX20, MT-CO2/COX2, COX18, SCO1 and SCO2. Interacts with COA1, MT-CO2/COX2, SCO1, SCO2 and COX20. Interacts with COX20 in a MT-CO2/COX2- and COX18-dependent manner. Interacts with COX16.

The protein resides in the mitochondrion intermembrane space. Functionally, involved in the maturation of the mitochondrial respiratory chain complex IV subunit MT-CO2/COX2. Thereby, may regulate early steps of complex IV assembly. Mitochondrial respiratory chain complex IV or cytochrome c oxidase is the component of the respiratory chain that catalyzes the transfer of electrons from intermembrane space cytochrome c to molecular oxygen in the matrix and as a consequence contributes to the proton gradient involved in mitochondrial ATP synthesis. May also be required for efficient formation of respiratory supercomplexes comprised of complexes III and IV. The polypeptide is Cytochrome c oxidase assembly factor 6 homolog (COA6) (Bos taurus (Bovine)).